Here is a 440-residue protein sequence, read N- to C-terminus: Streptokinase (440 aa).

The N-terminal stretch at 1–26 (MKNYLSFGMFALLFALTFGTVKPVQA) is a signal peptide. The segment at 72–94 (PAQGGKTEQGLRPKSKPLATDKG) is disordered.

In terms of biological role, this protein is not a protease, but it activates plasminogen by complexing with it. As a potential virulence factor, it is thought to prevent the formation of effective fibrin barriers around the site of infection, thereby contributing to the invasiveness of the cells. The chain is Streptokinase (ska) from Streptococcus pyogenes.